A 152-amino-acid polypeptide reads, in one-letter code: UPF0225 protein KPK_2103 (152 aa).

This sequence belongs to the UPF0225 family.

This chain is UPF0225 protein KPK_2103, found in Klebsiella pneumoniae (strain 342).